Reading from the N-terminus, the 194-residue chain is Thymidine kinase (194 aa).

Residues 15–22 and 88–91 contribute to the ATP site; these read GCMFSGKT and DELH. The active-site Proton acceptor is E89. Zn(2+) is bound by residues C148, C151, C186, and C189.

It belongs to the thymidine kinase family. Homotetramer.

It localises to the cytoplasm. It carries out the reaction thymidine + ATP = dTMP + ADP + H(+). This Roseiflexus castenholzii (strain DSM 13941 / HLO8) protein is Thymidine kinase.